The primary structure comprises 104 residues: Gastrin (104 aa).

A signal peptide spans 1–21 (MPRLCVCMLVLVLALATFSEA). Residues 22–58 (SWKPRSQLQDASSGPRTNGALEQHQLEKLGPASHHRR) constitute a propeptide that is removed on maturation. Residues 23-104 (WKPRSQLQDA…RSAEEEDQYN (82 aa)) are disordered. A compositionally biased stretch (polar residues) spans 25-37 (PRSQLQDASSGPR). Tyrosine 87 is subject to Sulfotyrosine. Position 92 is a phenylalanine amide (phenylalanine 92). Serine 96 is modified (phosphoserine). A propeptide spanning residues 96–104 (SAEEEDQYN) is cleaved from the precursor. Tyrosine 103 carries the sulfotyrosine modification.

The protein belongs to the gastrin/cholecystokinin family. Post-translationally, sulfation on Tyr-87 enhances proteolytic processing, and blocks peptide degradation. Levels of sulfation differ between proteolytically-cleaved gastrins and between tissues.

The protein localises to the secreted. In terms of biological role, gastrin stimulates the stomach mucosa to produce and secrete hydrochloric acid and the pancreas to secrete its digestive enzymes. It also stimulates smooth muscle contraction and increases blood circulation and water secretion in the stomach and intestine. The protein is Gastrin (Gast) of Rattus norvegicus (Rat).